Consider the following 286-residue polypeptide: NFU1 iron-sulfur cluster scaffold homolog, mitochondrial (286 aa).

A mitochondrion-targeting transit peptide spans 1–66; that stretch reads MSKLLTNTAL…RQIQLSGARN (66 aa). Residues 182–250 form a nifU region; sequence IKELLDTRIR…IPEVESVEQV (69 aa). Residues cysteine 219 and cysteine 222 each coordinate [4Fe-4S] cluster.

The protein belongs to the NifU family.

It is found in the mitochondrion. Functionally, molecular scaffold for [Fe-S] cluster assembly of mitochondrial iron-sulfur proteins. The sequence is that of NFU1 iron-sulfur cluster scaffold homolog, mitochondrial from Drosophila ananassae (Fruit fly).